A 250-amino-acid chain; its full sequence is Sugar fermentation stimulation protein homolog (250 aa).

This sequence belongs to the SfsA family.

This Synechococcus sp. (strain CC9311) protein is Sugar fermentation stimulation protein homolog.